The following is a 587-amino-acid chain: Protein cereblon (587 aa).

3 disordered regions span residues methionine 1 to tyrosine 56, aspartate 78 to asparagine 113, and phenylalanine 157 to glycine 195. Composition is skewed to polar residues over residues glutamate 22–glutamine 31 and serine 86–serine 96. The segment covering glutamine 159 to glutamate 168 has biased composition (basic and acidic residues). The span at threonine 170–aspartate 181 shows a compositional bias: acidic residues. A compositionally biased stretch (pro residues) spans proline 182–proline 191. A Lon N-terminal domain is found at histidine 227 to threonine 453. In terms of domain architecture, CULT spans glutamate 452–lysine 561. Positions 457, 460, 526, and 529 each coordinate Zn(2+).

It belongs to the CRBN family. In terms of assembly, likely a component of a DCX (DDB1-CUL4-X-box) protein ligase complex. May interact with pic/DDB1. In terms of processing, ubiquitinated.

The protein localises to the nucleus. Its pathway is protein modification; protein ubiquitination. In terms of biological role, substrate recognition component of a DCX (DDB1-CUL4-X-box) E3 protein ligase complex that mediates the ubiquitination and subsequent proteasomal degradation of target proteins. Has an essential role in mediating growth by negatively regulating insulin signaling. It also has a role in maintaining presynaptic function in the neuromuscular junction synapses of third-instar larvae. This Drosophila simulans (Fruit fly) protein is Protein cereblon.